An 84-amino-acid chain; its full sequence is MERNLRKERVGVVSSNKMDKTITVAVKWKEKHPIYGKFVNKTKKYHAHDEKNECGIGDTVRIMETRPLSRTKRWRLTEIIERAK.

It belongs to the universal ribosomal protein uS17 family. In terms of assembly, part of the 30S ribosomal subunit.

Functionally, one of the primary rRNA binding proteins, it binds specifically to the 5'-end of 16S ribosomal RNA. This is Small ribosomal subunit protein uS17 from Porphyromonas gingivalis (strain ATCC 33277 / DSM 20709 / CIP 103683 / JCM 12257 / NCTC 11834 / 2561).